A 28-amino-acid polypeptide reads, in one-letter code: GVACGESCVYLPCFTVGCTCTSSQCFKN.

The cyclopeptide (Gly-Asn) cross-link spans 1–28 (GVACGESCVYLPCFTVGCTCTSSQCFKN). Disulfide bonds link C4/C18, C8/C20, and C13/C25.

This sequence belongs to the cyclotide family. Bracelet subfamily. In terms of processing, this is a cyclic peptide.

Probably participates in a plant defense mechanism. The sequence is that of Cyclotide ltri-A from Leonia triandra.